A 501-amino-acid chain; its full sequence is Ribose import ATP-binding protein RbsA (501 aa).

ABC transporter domains follow at residues 6-242 and 253-495; these read LQLS…VGRK and KHGE…VGKK. Position 38–45 (38–45) interacts with ATP; sequence GENGAGKS.

Belongs to the ABC transporter superfamily. Ribose importer (TC 3.A.1.2.1) family. The complex is composed of an ATP-binding protein (RbsA), two transmembrane proteins (RbsC) and a solute-binding protein (RbsB).

Its subcellular location is the cell inner membrane. The enzyme catalyses D-ribose(out) + ATP + H2O = D-ribose(in) + ADP + phosphate + H(+). Part of the ABC transporter complex RbsABC involved in ribose import. Responsible for energy coupling to the transport system. This Vibrio parahaemolyticus serotype O3:K6 (strain RIMD 2210633) protein is Ribose import ATP-binding protein RbsA.